Consider the following 307-residue polypeptide: PCP degradation transcriptional activation protein (307 aa).

In terms of domain architecture, HTH lysR-type spans 6 to 63 (LPLGHLMVFDALYRHGSAGKAAHALSMPQPTLSRWLAQLRTHFDDPLFVRTRSGMEPT). Positions 23 to 42 (AGKAAHALSMPQPTLSRWLA) form a DNA-binding region, H-T-H motif.

Belongs to the LysR transcriptional regulatory family.

In terms of biological role, transcriptional activator for the pcpA, pcpB and pcpE genes for pentachlorophenol (PCP) degradation. Essential for PCP degradation. In Sphingobium chlorophenolicum, this protein is PCP degradation transcriptional activation protein (pcpR).